A 490-amino-acid polypeptide reads, in one-letter code: MHHCKRYRSPEPDPYLSYRWKRRRSYSREHEGRLRYPSRREPPPRRSRSRSHDRLPYQRRYREHRDSDTYRCEDRSPSFGEDYYGSSRCHHRRRSREREPYRTRKHAHHCHKRRTRSCSSASSRSQQSSKRSSRSVEDDKEGHLVCRIGDWLQERYEIVGNLGEGTFGKVVECLDHARGKSQVALKIIRNVGKYREAARLEINVLKKIKEKDKENKFLCVLMSDWFNFHGHMCIAFELLGKNTFEFLKENNFQPYPLPHVRHMAYQLCHALRFLHENQLTHTDLKPENILFVNSEFETLYNEHKSCEEKSVKNTSIRVADFGSATFDHEHHTTIVATRHYRPPEVILELGWAQPCDVWSIGCILFEYYRGFTLFQTHENREHLVMMEKILGPIPSHMIHRTRKQKYFYKGGLVWDENSSDGRYVKENCKPLKSYMLQDTLEHVQLFDLMRRMLEFDPAQRITLAEALLHPFFAGLTPEERSFHTSRNPSR.

Tyr7 is subject to Phosphotyrosine. Residues Ser9, Ser49, Ser51, Ser67, Ser76, and Ser78 each carry the phosphoserine modification. The disordered stretch occupies residues 22-138; the sequence is RRRSYSREHE…SKRSSRSVED (117 aa). Basic and acidic residues-rich tracts occupy residues 26-56 and 63-76; these read YSREHEGRLRYPSRREPPPRRSRSRSHDRLP and EHRDSDTYRCEDRS. Basic residues predominate over residues 103-116; the sequence is TRKHAHHCHKRRTR. A compositionally biased stretch (low complexity) spans 117–130; sequence SCSSASSRSQQSSK. Ser135 carries the post-translational modification Phosphoserine. Residues 156-472 enclose the Protein kinase domain; the sequence is YEIVGNLGEG…LAEALLHPFF (317 aa). ATP-binding positions include 162-170 and Lys186; that span reads LGEGTFGKV. Asp283 acts as the Proton acceptor in catalysis.

It belongs to the protein kinase superfamily. CMGC Ser/Thr protein kinase family. Lammer subfamily. Post-translationally, autophosphorylates on all three types of residues.

The protein resides in the nucleus. Its subcellular location is the cytoplasm. It is found in the cytoplasmic vesicle. It localises to the secretory vesicle. The protein localises to the acrosome. It carries out the reaction L-seryl-[protein] + ATP = O-phospho-L-seryl-[protein] + ADP + H(+). It catalyses the reaction L-threonyl-[protein] + ATP = O-phospho-L-threonyl-[protein] + ADP + H(+). The enzyme catalyses L-tyrosyl-[protein] + ATP = O-phospho-L-tyrosyl-[protein] + ADP + H(+). Leucettine L41 inhibits its kinase activity and affects the regulation of alternative splicing mediated by phosphorylation of SR proteins. Functionally, dual specificity kinase acting on both serine/threonine and tyrosine-containing substrates. Phosphorylates serine- and arginine-rich (SR) proteins of the spliceosomal complex. May be a constituent of a network of regulatory mechanisms that enable SR proteins to control RNA splicing and can cause redistribution of SR proteins from speckles to a diffuse nucleoplasmic distribution. Phosphorylates SRSF1 and SRSF3. Regulates the alternative splicing of tissue factor (F3) pre-mRNA in endothelial cells. The sequence is that of Dual specificity protein kinase CLK3 (CLK3) from Bos taurus (Bovine).